We begin with the raw amino-acid sequence, 283 residues long: Ribosomal RNA small subunit methyltransferase I (283 aa).

It belongs to the methyltransferase superfamily. RsmI family.

It localises to the cytoplasm. The enzyme catalyses cytidine(1402) in 16S rRNA + S-adenosyl-L-methionine = 2'-O-methylcytidine(1402) in 16S rRNA + S-adenosyl-L-homocysteine + H(+). Functionally, catalyzes the 2'-O-methylation of the ribose of cytidine 1402 (C1402) in 16S rRNA. The polypeptide is Ribosomal RNA small subunit methyltransferase I (Haemophilus influenzae (strain ATCC 51907 / DSM 11121 / KW20 / Rd)).